The following is a 603-amino-acid chain: MALPSMSVSEFDALIEQCTNEKIPNGEIDLSAALELSDMIRSRRLPPKDAMRCLKKRVLQTRNNQNLQFSVWRLVEVCMKNGGVPFLKEVCSREFMDCLEQVILAESTDYELEQFCSRLVGELYLAFKNDSQLSYVVKVYQKLVSRGIDMENLKPTENLNAMFDAKTPADWIDSDACMICSTQFTLLNRKHHCRSCGGVFCQLHSSKFIPLPDLGIFEPVRVCDNCFEDYDLKRKSSKGKKSKGKKRFTRSEDDDEDLRRAIELSLKENGRDADTFIPDTAKLEPLKKDPDEEDPDLKAAIEASLREHQQEEMRRKSQAKNMYNTSSPSVAPPIENNYDLSSNEEEDIHLFASLVERMKTQPPTAVLEDTQLQQLYQKVLGVRPKLNYALSDTVSKYNTVYEMNSKISDIMNMYDSMLEMQLRNISLSQQYAIPESGRNSYGYHQNMPQYDQPNSPQIIAQPQIHSPQQNERTILNYASPVSQHLSNGATTNTYQQGSALQNQQPAAPEPQPVSFEKPSTTSQLEGLILEEPSEPPYPDENTTIENPKIEQASERPYPDDHLKQENITSFDFPTVPLRKLSIHGSEQEVKEEPVQQEQLLIEL.

Residues Asn20–Glu151 enclose the VHS domain. Residues Trp171–Asp231 form an FYVE-type; atypical zinc finger. 8 residues coordinate Zn(2+): Cys177, Cys180, Cys193, Cys196, Cys201, His204, Cys223, and Cys226. UIM domains lie at Asp253–Asp272 and Glu292–Glu311. Disordered stretches follow at residues Ala273–Asp294, Lys320–Asp339, and Gln496–His561. Positions Ala281 to Asp294 are enriched in basic and acidic residues. The segment covering Lys320–Ser329 has biased composition (polar residues). Residues Pro547 to His561 show a composition bias toward basic and acidic residues.

It belongs to the VPS27 family. As to quaternary structure, component of the ESCRT-0 complex composed of HSE1 and VPS27.

Its subcellular location is the endosome membrane. In terms of biological role, component of the ESCRT-0 complex which is the sorting receptor for ubiquitinated cargo proteins at the multivesicular body (MVB) and recruits ESCRT-I to the MVB outer membrane. The protein is Vacuolar protein sorting-associated protein 27 (VPS27) of Kluyveromyces lactis (strain ATCC 8585 / CBS 2359 / DSM 70799 / NBRC 1267 / NRRL Y-1140 / WM37) (Yeast).